The primary structure comprises 833 residues: Bifunctional dethiobiotin synthetase/7,8-diamino-pelargonic acid aminotransferase, mitochondrial (833 aa).

The N-terminal 23 residues, 1–23 (MIPVTATLIRHRLRHLRHRIRFK), are a transit peptide targeting the mitochondrion. Residues 36–299 (HPTYLIWSAN…VLVLPPVPKD (264 aa)) are dethiobiotin synthetase. An ATP-binding site is contributed by 47-52 (SLGKTL). Threonine 51 serves as a coordination point for Mg(2+). Position 81 (threonine 81) interacts with substrate. Aspartate 88 serves as a coordination point for Mg(2+). ATP is bound by residues aspartate 97, 210 to 213 (ETAG), and 270 to 271 (ED). Glutamate 210 provides a ligand contact to Mg(2+). Positions 332–830 (RLNGMAKLAG…TKLYKRLGEF (499 aa)) are 7,8-diamino-pelargonic acid aminotransferase. Residue 391–392 (WW) coordinates (8S)-8-amino-7-oxononanoate. Pyridoxal 5'-phosphate is bound at residue 453–454 (GS). A (8S)-8-amino-7-oxononanoate-binding site is contributed by tyrosine 495. ATP is bound by residues 518-520 (PWY) and glutamate 545. Aspartate 637 is a binding site for pyridoxal 5'-phosphate. (8S)-8-amino-7-oxononanoate-binding residues include lysine 666 and glycine 700. Residue lysine 666 is modified to N6-(pyridoxal phosphate)lysine. Position 701-702 (701-702 (HS)) interacts with pyridoxal 5'-phosphate. Arginine 797 lines the (8S)-8-amino-7-oxononanoate pocket.

It in the N-terminal section; belongs to the dethiobiotin synthetase family. The protein in the C-terminal section; belongs to the class-III pyridoxal-phosphate-dependent aminotransferase family. BioA subfamily. In terms of assembly, homodimer. Mg(2+) serves as cofactor. Pyridoxal 5'-phosphate is required as a cofactor.

The protein localises to the mitochondrion matrix. It carries out the reaction (7R,8S)-7,8-diammoniononanoate + CO2 + ATP = (4R,5S)-dethiobiotin + ADP + phosphate + 3 H(+). The catalysed reaction is (8S)-8-amino-7-oxononanoate + S-adenosyl-L-methionine = S-adenosyl-4-methylsulfanyl-2-oxobutanoate + (7R,8S)-7,8-diammoniononanoate. It functions in the pathway cofactor biosynthesis; biotin biosynthesis; biotin from 7,8-diaminononanoate: step 1/2. Its pathway is cofactor biosynthesis; biotin biosynthesis; 7,8-diaminononanoate from 8-amino-7-oxononanoate (SAM route): step 1/1. In terms of biological role, bifunctional enzyme that catalyzes two different reactions involved in the biotin biosynthesis. Its function is as follows. Catalyzes a mechanistically unusual reaction, the ATP-dependent insertion of CO2 between the N7 and N8 nitrogen atoms of 7,8-diaminopelargonic acid (DAPA) to form an ureido ring. Functionally, catalyzes the transfer of the alpha-amino group from S-adenosyl-L-methionine (SAM) to 7-keto-8-aminopelargonic acid (KAPA) to form 7,8-diaminopelargonic acid (DAPA). It is the only aminotransferase known to utilize SAM as an amino donor. This is Bifunctional dethiobiotin synthetase/7,8-diamino-pelargonic acid aminotransferase, mitochondrial from Arabidopsis thaliana (Mouse-ear cress).